A 172-amino-acid chain; its full sequence is Shikimate kinase (172 aa).

11–16 (GAGKST) serves as a coordination point for ATP. Ser15 is a binding site for Mg(2+). Asp33, Arg57, and Gly79 together coordinate substrate. Position 117 (Arg117) interacts with ATP. Residue Arg136 participates in substrate binding. Arg153 is a binding site for ATP.

This sequence belongs to the shikimate kinase family. As to quaternary structure, monomer. Mg(2+) is required as a cofactor.

It localises to the cytoplasm. The catalysed reaction is shikimate + ATP = 3-phosphoshikimate + ADP + H(+). It functions in the pathway metabolic intermediate biosynthesis; chorismate biosynthesis; chorismate from D-erythrose 4-phosphate and phosphoenolpyruvate: step 5/7. Catalyzes the specific phosphorylation of the 3-hydroxyl group of shikimic acid using ATP as a cosubstrate. This chain is Shikimate kinase, found in Pseudomonas savastanoi pv. phaseolicola (strain 1448A / Race 6) (Pseudomonas syringae pv. phaseolicola (strain 1448A / Race 6)).